The primary structure comprises 67 residues: Preprofallaxidin-4 (67 aa).

Residues 1–22 (MASLKKFLFLVLFLGMVSLSIC) form the signal peptide. Residues 23 to 46 (DKEKREGENEEEEEEHEEESEEKR) constitute a propeptide that is removed on maturation. The segment at 24–48 (KEKREGENEEEEEEHEEESEEKRGL) is disordered. The segment covering 30 to 42 (ENEEEEEEHEEES) has biased composition (acidic residues).

This sequence belongs to the frog skin active peptide (FSAP) family. Dermaseptin subfamily. As to expression, expressed by the skin glands.

It localises to the secreted. This is Preprofallaxidin-4 from Litoria fallax (Eastern dwarf tree frog).